The primary structure comprises 907 residues: Protein translocase subunit SecA (907 aa).

ATP contacts are provided by residues Gln87, 105–109 (GEGKT), and Asp510. Zn(2+) is bound by residues Cys892, Cys894, Cys903, and His904.

Belongs to the SecA family. As to quaternary structure, monomer and homodimer. Part of the essential Sec protein translocation apparatus which comprises SecA, SecYEG and auxiliary proteins SecDF-YajC and YidC. Requires Zn(2+) as cofactor.

It is found in the cell inner membrane. Its subcellular location is the cytoplasm. It carries out the reaction ATP + H2O + cellular proteinSide 1 = ADP + phosphate + cellular proteinSide 2.. In terms of biological role, part of the Sec protein translocase complex. Interacts with the SecYEG preprotein conducting channel. Has a central role in coupling the hydrolysis of ATP to the transfer of proteins into and across the cell membrane, serving both as a receptor for the preprotein-SecB complex and as an ATP-driven molecular motor driving the stepwise translocation of polypeptide chains across the membrane. The polypeptide is Protein translocase subunit SecA (Acinetobacter baumannii (strain AB0057)).